The following is a 548-amino-acid chain: Tylosin resistance ATP-binding protein TlrC (548 aa).

ABC transporter domains follow at residues 9-265 and 347-547; these read LSLH…RRRQ and IATA…VSGA. Residues 41 to 48 and 387 to 394 each bind ATP; these read GDNGAGKS and GPNGAGKS.

It belongs to the ABC transporter superfamily.

It is found in the cell membrane. In terms of biological role, responsible for tylosin resistance, and is proposed to be a subunit of a multicomponent export system for the energy-dependent efflux of tylosin. This Streptomyces fradiae (Streptomyces roseoflavus) protein is Tylosin resistance ATP-binding protein TlrC (tlrC).